The following is a 322-amino-acid chain: Glycerate dehydrogenase (322 aa).

NAD(+)-binding positions include 158–159, Asp178, 239–241, and Asp265; these read SI and TAR. The active site involves Arg241. Residue Glu270 is part of the active site. His288 serves as the catalytic Proton donor. 288-291 contributes to the NAD(+) binding site; the sequence is HIGS.

Belongs to the D-isomer specific 2-hydroxyacid dehydrogenase family. In terms of assembly, homodimer.

It catalyses the reaction (R)-glycerate + NAD(+) = 3-hydroxypyruvate + NADH + H(+). The protein operates within one-carbon metabolism; formaldehyde assimilation via serine pathway. Functionally, active on hydroxypyruvate and glyoxylate. The sequence is that of Glycerate dehydrogenase from Hyphomicrobium methylovorum.